The primary structure comprises 458 residues: Pentatricopeptide repeat-containing protein At1g77405 (458 aa).

7 PPR repeats span residues 164 to 198, 199 to 233, 236 to 271, 282 to 316, 317 to 351, 353 to 387, and 388 to 419; these read TTASITCLMKCLGEEGFVKEALATFYRMKEYHCKP, DVYAYNTIINALCRVGNFKKARFLLDQMQLPGFRY, DTYTYTILISSYCRYGMQTGCRKAIRRRMWEANRMF, DVVTYNCLIDGCCKTNRIGRALELFEDMKTKGCVP, NQVTYNSFIRYYSVTNEIEGAIEMMRTMKKLGHGV, GSSTYTPLIHALVETRRAAEARDLVVEMVEAGLVP, and REYTYKLVCDALSSEGLASTLDEELHKRMREG.

Belongs to the PPR family. P subfamily.

The protein is Pentatricopeptide repeat-containing protein At1g77405 of Arabidopsis thaliana (Mouse-ear cress).